Reading from the N-terminus, the 232-residue chain is Phosphatidylserine decarboxylase proenzyme (232 aa).

Catalysis depends on Ser-201, which acts as the Schiff-base intermediate with substrate; via pyruvic acid. Ser-201 is modified (pyruvic acid (Ser); by autocatalysis).

The protein belongs to the phosphatidylserine decarboxylase family. PSD-A subfamily. As to quaternary structure, heterodimer of a large membrane-associated beta subunit and a small pyruvoyl-containing alpha subunit. Requires pyruvate as cofactor. In terms of processing, is synthesized initially as an inactive proenzyme. Formation of the active enzyme involves a self-maturation process in which the active site pyruvoyl group is generated from an internal serine residue via an autocatalytic post-translational modification. Two non-identical subunits are generated from the proenzyme in this reaction, and the pyruvate is formed at the N-terminus of the alpha chain, which is derived from the carboxyl end of the proenzyme. The post-translation cleavage follows an unusual pathway, termed non-hydrolytic serinolysis, in which the side chain hydroxyl group of the serine supplies its oxygen atom to form the C-terminus of the beta chain, while the remainder of the serine residue undergoes an oxidative deamination to produce ammonia and the pyruvoyl prosthetic group on the alpha chain.

Its subcellular location is the cell membrane. It carries out the reaction a 1,2-diacyl-sn-glycero-3-phospho-L-serine + H(+) = a 1,2-diacyl-sn-glycero-3-phosphoethanolamine + CO2. It participates in phospholipid metabolism; phosphatidylethanolamine biosynthesis; phosphatidylethanolamine from CDP-diacylglycerol: step 2/2. Catalyzes the formation of phosphatidylethanolamine (PtdEtn) from phosphatidylserine (PtdSer). This is Phosphatidylserine decarboxylase proenzyme from Mycolicibacterium smegmatis (strain ATCC 700084 / mc(2)155) (Mycobacterium smegmatis).